The chain runs to 413 residues: Heparan-sulfate 6-O-sulfotransferase 1-A (413 aa).

Topologically, residues 9 to 15 are cytoplasmic; the sequence is MVERSSK. Residues 16-36 form a helical; Signal-anchor for type II membrane protein membrane-spanning segment; the sequence is FLFIVVGSVLFMLILYQYVAP. The Lumenal portion of the chain corresponds to 37 to 413; that stretch reads GMMNFGSPHG…DYMNHIINRW (377 aa). A 3'-phosphoadenylyl sulfate-binding site is contributed by 92–100; it reads HIQKTGGTT. Substrate contacts are provided by residues 122–123, Arg-139, Trp-144, and His-149; that span reads KK. His-149 serves as the catalytic Proton acceptor. Residues Arg-183 and Ser-191 each contribute to the 3'-phosphoadenylyl sulfate site. Substrate is bound by residues His-195 and Trp-202. Asn-262 is a glycosylation site (N-linked (GlcNAc...) asparagine). 315-317 contacts 3'-phosphoadenylyl sulfate; that stretch reads MQY. An N-linked (GlcNAc...) asparagine glycan is attached at Asn-318. Position 321–322 (321–322) interacts with 3'-phosphoadenylyl sulfate; it reads RA. Asn-329 carries N-linked (GlcNAc...) asparagine glycosylation. The disordered stretch occupies residues 374–401; the sequence is PLFPFRRTSSSDSTFRDDAPESEGSRLP.

Belongs to the sulfotransferase 6 family. As to expression, during somitogenesis, first expressed in polster and presumptive forebrain. During mid-somitogenesis, expressed in eye, hindbrain and anterior spinal cord. During late somitogenesis, strong expression in eye and hindbrain, decreased levels in midbrain and anterior spinal cord. At 24 hours post-fertilization (hpf), expressed in neural retina and lens, brain and anterior spinal cord. At 36 hpf, retinal expression is confined to the ciliary marginal zone and there is strong expression in tectum, rhombomeres and otic vesicle. At 48 hpf, expressed in retinal ganglion cells and in tectum, rhombomeres and pectoral fin. Not detected in the vasculature during embryogenesis.

Its subcellular location is the membrane. The enzyme catalyses alpha-D-glucosaminyl-[heparan sulfate](n) + 3'-phosphoadenylyl sulfate = 6-sulfo-alpha-D-glucosaminyl-[heparan sulfate](n) + adenosine 3',5'-bisphosphate + H(+). In terms of biological role, 6-O-sulfation enzyme which catalyzes the transfer of sulfate from 3'-phosphoadenosine 5'-phosphosulfate (PAPS) to position 6 of the N-sulfoglucosamine residue (GlcNS) of heparan sulfate. The sequence is that of Heparan-sulfate 6-O-sulfotransferase 1-A from Danio rerio (Zebrafish).